Here is a 627-residue protein sequence, read N- to C-terminus: Putative polyketide hydroxylase (627 aa).

Residues 22–51 (PVLV…LVER) and 309–319 (YRSGRVLLAGD) contribute to the FAD site. Positions 370–469 (AEATSARAAH…GGGPGGGGPQ (100 aa)) are disordered. Over residues 395-469 (AGGGGPGAGT…GGGPGGGGPQ (75 aa)) the composition is skewed to gly residues.

Belongs to the PheA/TfdB FAD monooxygenase family. The cofactor is FAD.

Involved in developmentally regulated synthesis of a compound biosynthetically related to polyketide antibiotics which is essential for spore color in Streptococcus coelicolor. The sequence is that of Putative polyketide hydroxylase from Streptomyces coelicolor (strain ATCC BAA-471 / A3(2) / M145).